A 498-amino-acid polypeptide reads, in one-letter code: Glutamate--tRNA ligase (498 aa).

The 'HIGH' region motif lies at 12-22 (PSPTGHLHIGN). The 'KMSKS' region motif lies at 259–263 (KLSKR). Lys262 is an ATP binding site.

It belongs to the class-I aminoacyl-tRNA synthetase family. Glutamate--tRNA ligase type 1 subfamily. In terms of assembly, monomer.

The protein resides in the cytoplasm. It catalyses the reaction tRNA(Glu) + L-glutamate + ATP = L-glutamyl-tRNA(Glu) + AMP + diphosphate. Its function is as follows. Catalyzes the attachment of glutamate to tRNA(Glu) in a two-step reaction: glutamate is first activated by ATP to form Glu-AMP and then transferred to the acceptor end of tRNA(Glu). The polypeptide is Glutamate--tRNA ligase (Limosilactobacillus fermentum (strain NBRC 3956 / LMG 18251) (Lactobacillus fermentum)).